The chain runs to 780 residues: Striatin (780 aa).

The stretch at 53–120 (LHFLQHEWAR…QERAKYHKLK (68 aa)) forms a coiled coil. The caveolin-binding stretch occupies residues 55–63 (FLQHEWARF). The segment at 124 to 145 (ELNQGDMKPPSYDSDEGNETEV) is disordered. At serine 137 the chain carries Phosphoserine. Residues 149 to 166 (QNSQFMWKQGRQLLRQYL) are calmodulin-binding. Threonine 225 carries the post-translational modification Phosphothreonine. A phosphoserine mark is found at serine 227, serine 229, serine 245, and serine 259. 3 disordered regions span residues 290–321 (FLVASEEGDNESRSAGDGTDWEKEDQCLTPER), 334–353 (EQYKKERKGKKGVKRPNRSK), and 363–388 (DVDELPSLQPSVGSPSRPSSSRLPEQ). The span at 299–315 (NESRSAGDGTDWEKEDQ) shows a compositional bias: basic and acidic residues. The span at 338 to 351 (KERKGKKGVKRPNR) shows a compositional bias: basic residues. WD repeat units follow at residues 461-500 (SHFDGIRALAFHPIEPVLITASEDHTLKMWNLQKTAPAKK), 514-553 (AHKGPVLCVVMSSNGEQCYSGGTDGLIQSWSTTNPNVDPY), 567-606 (GHTDAVWGLAYSAAHQRLLSCSADGTLRLWTTTEVAPALT), 662-701 (SSSCQINRVISHPTLPISITAHEDRHIKFYDNNTGKLIHS), 704-743 (AHLEAVTSLAVDPNGLYLMSGSHDCSIRLWNLESKTCIQE), and 750-780 (KFEESIHDVAFHPSKCYIASAGADALAKVFV).

The protein belongs to the WD repeat striatin family. As to quaternary structure, part of the core of STRIPAK complexes composed of PP2A catalytic and scaffolding subunits, the striatins (PP2A regulatory subunits), the striatin-associated proteins MOB4, STRIP1 and STRIP2, PDCD10 and members of the STE20 kinases, such as STK24 and STK26. Interacts with CTTNBP2; this interaction may regulate dendritic spine distribution of STRN. Activation of glutamate receptors weakens the interaction with CTTNBP2. In terms of tissue distribution, mainly expressed in the central nervous system. Mostly confined in dendrites, not in axons, and is most abundant in dendritic spines.

The protein resides in the cytoplasm. It is found in the membrane. It localises to the cell projection. The protein localises to the dendritic spine. Functionally, calmodulin-binding scaffolding protein which is the center of the striatin-interacting phosphatase and kinase (STRIPAK) complexes. STRIPAK complexes have critical roles in protein (de)phosphorylation and are regulators of multiple signaling pathways including Hippo, MAPK, nuclear receptor and cytoskeleton remodeling. Different types of STRIPAK complexes are involved in a variety of biological processes such as cell growth, differentiation, apoptosis, metabolism and immune regulation. This is Striatin (Strn) from Rattus norvegicus (Rat).